The chain runs to 438 residues: 23S rRNA (uracil(1939)-C(5))-methyltransferase RlmD (438 aa).

The TRAM domain occupies 10 to 68 (RVTTRQTITVKVHDLDSFGQGVAHHNGKALFVQGALPDEVAEVSIIEDKRHFSRGVATR). [4Fe-4S] cluster contacts are provided by Cys-81, Cys-87, Cys-90, and Cys-168. Residues Gln-271, Phe-300, Asn-305, Glu-321, Asn-348, and Asp-369 each contribute to the S-adenosyl-L-methionine site. Cys-395 (nucleophile) is an active-site residue.

The protein belongs to the class I-like SAM-binding methyltransferase superfamily. RNA M5U methyltransferase family. RlmD subfamily.

The catalysed reaction is uridine(1939) in 23S rRNA + S-adenosyl-L-methionine = 5-methyluridine(1939) in 23S rRNA + S-adenosyl-L-homocysteine + H(+). Catalyzes the formation of 5-methyl-uridine at position 1939 (m5U1939) in 23S rRNA. The chain is 23S rRNA (uracil(1939)-C(5))-methyltransferase RlmD from Erwinia tasmaniensis (strain DSM 17950 / CFBP 7177 / CIP 109463 / NCPPB 4357 / Et1/99).